Consider the following 337-residue polypeptide: Eukaryotic translation initiation factor 3 subunit H (337 aa).

Positions 21-153 (VQCDGLAVMK…LKAYRLTPQA (133 aa)) constitute an MPN domain.

The protein belongs to the eIF-3 subunit H family. As to quaternary structure, component of the eukaryotic translation initiation factor 3 (eIF-3) complex. The eIF-3 complex interacts with pix. Interacts with mxt.

It localises to the cytoplasm. Component of the eukaryotic translation initiation factor 3 (eIF-3) complex, which is involved in protein synthesis of a specialized repertoire of mRNAs and, together with other initiation factors, stimulates binding of mRNA and methionyl-tRNAi to the 40S ribosome. The eIF-3 complex specifically targets and initiates translation of a subset of mRNAs involved in cell proliferation. The chain is Eukaryotic translation initiation factor 3 subunit H from Drosophila pseudoobscura pseudoobscura (Fruit fly).